Reading from the N-terminus, the 298-residue chain is Tyrosine recombinase XerC (298 aa).

Positions 2 to 88 constitute a Core-binding (CB) domain; sequence TDLHTDVERY…ALRSFFDWLV (87 aa). Residues 109 to 288 form the Tyr recombinase domain; it reads HLPKNIDVDD…DFQHLASVYD (180 aa). Residues arginine 148, lysine 172, histidine 240, arginine 243, and histidine 266 contribute to the active site. The active-site O-(3'-phospho-DNA)-tyrosine intermediate is tyrosine 275.

The protein belongs to the 'phage' integrase family. XerC subfamily. As to quaternary structure, forms a cyclic heterotetrameric complex composed of two molecules of XerC and two molecules of XerD, in which XerC interacts with XerD via its C-terminal region, XerD interacts with XerC via its C-terminal region and so on.

The protein resides in the cytoplasm. With respect to regulation, ftsK may regulate the catalytic switch between XerC and XerD in the heterotetrameric complex during the two steps of the recombination process. In terms of biological role, site-specific tyrosine recombinase, which acts by catalyzing the cutting and rejoining of the recombining DNA molecules. Binds cooperatively to specific DNA consensus sequences that are separated from XerD binding sites by a short central region, forming the heterotetrameric XerC-XerD complex that recombines DNA substrates. The complex is essential to convert dimers of the bacterial chromosome into monomers to permit their segregation at cell division. It also contributes to the segregational stability of plasmids. In the complex XerC specifically exchanges the top DNA strands. In Shigella dysenteriae serotype 1 (strain Sd197), this protein is Tyrosine recombinase XerC.